The following is a 652-amino-acid chain: ATP-dependent zinc metalloprotease FtsH (652 aa).

Residues 1–11 (MKKQNNGLIKN) lie on the Cytoplasmic side of the membrane. A helical transmembrane segment spans residues 12–32 (PFLWLLFIFFLVTGFQYFYSG). The Extracellular portion of the chain corresponds to 33-131 (NNSGGSQQIN…EVTVKHESSS (99 aa)). A helical transmembrane segment spans residues 132-152 (GIWINLLVSIVPFGILFFFLF). Residues 153-652 (SMMGNMGGGN…EVKSKMNDEK (500 aa)) lie on the Cytoplasmic side of the membrane. 227 to 234 (GPPGTGKT) is a binding site for ATP. Histidine 449 contacts Zn(2+). Residue glutamate 450 is part of the active site. Residues histidine 453 and aspartate 525 each coordinate Zn(2+). A disordered region spans residues 628–652 (MPEAVEEESHALSYDEVKSKMNDEK). Residues 634-652 (EESHALSYDEVKSKMNDEK) show a composition bias toward basic and acidic residues.

It in the central section; belongs to the AAA ATPase family. The protein in the C-terminal section; belongs to the peptidase M41 family. As to quaternary structure, homohexamer. Zn(2+) serves as cofactor.

The protein resides in the cell membrane. In terms of biological role, acts as a processive, ATP-dependent zinc metallopeptidase for both cytoplasmic and membrane proteins. Plays a role in the quality control of integral membrane proteins. The chain is ATP-dependent zinc metalloprotease FtsH from Streptococcus pneumoniae serotype 4 (strain ATCC BAA-334 / TIGR4).